Consider the following 595-residue polypeptide: Chaperone protein HscA homolog (595 aa).

This sequence belongs to the heat shock protein 70 family.

Functionally, chaperone involved in the maturation of iron-sulfur cluster-containing proteins. Has a low intrinsic ATPase activity which is markedly stimulated by HscB. The sequence is that of Chaperone protein HscA homolog from Rickettsia rickettsii (strain Iowa).